Consider the following 98-residue polypeptide: NADH-ubiquinone oxidoreductase chain 4L (98 aa).

Transmembrane regions (helical) follow at residues 1-21 (MSMV…GLLV), 29-49 (SLLC…ITIL), and 61-81 (IILL…LVMV).

Belongs to the complex I subunit 4L family. As to quaternary structure, core subunit of respiratory chain NADH dehydrogenase (Complex I) which is composed of 45 different subunits.

The protein resides in the mitochondrion inner membrane. It catalyses the reaction a ubiquinone + NADH + 5 H(+)(in) = a ubiquinol + NAD(+) + 4 H(+)(out). In terms of biological role, core subunit of the mitochondrial membrane respiratory chain NADH dehydrogenase (Complex I) which catalyzes electron transfer from NADH through the respiratory chain, using ubiquinone as an electron acceptor. Part of the enzyme membrane arm which is embedded in the lipid bilayer and involved in proton translocation. In Mephitis mephitis (Striped skunk), this protein is NADH-ubiquinone oxidoreductase chain 4L (MT-ND4L).